The primary structure comprises 414 residues: Methyl-CpG-binding domain protein 2 (414 aa).

Residues 1–152 (MRAHPGGGRC…GPRATESGKR (152 aa)) are required for interaction with DHX9 and PRMT5. A disordered region spans residues 1–163 (MRAHPGGGRC…DCPALPPGWK (163 aa)). Residues 77–95 (GRGRGRGRGRGRGRGRGRG) show a composition bias toward basic residues. Residues 98 to 123 (QSGGSGLGGDGGGGAGGCGGGSGGGV) show a composition bias toward gly residues. An MBD domain is found at 148 to 216 (ESGKRMDCPA…SSFDFRTGKM (69 aa)). At serine 184 the chain carries Phosphoserine. The interval 217-244 (MPSKLQKNKQRLRNDPLNQNKGKPDLNT) is disordered. Over residues 232 to 244 (PLNQNKGKPDLNT) the composition is skewed to polar residues. At serine 410 the chain carries Phosphoserine.

As to quaternary structure, heterodimer with MBD3 (via N-terminus). Component of the MeCP1 complex that contains HDAC1 and HDAC2. Component of the nucleosome remodeling and deacetylase (NuRD) repressor complex, composed of core proteins MTA1, MTA2, MTA3, RBBP4, RBBP7, HDAC1, HDAC2, MBD2, MBD3, and peripherally associated proteins CDK2AP1, CDK2AP2, GATAD2A, GATAD2B, CHD3, CHD4 and CHD5. The exact stoichiometry of the NuRD complex is unknown, and some subunits such as MBD2 and MBD3, GATAD2A and GATAD2B, and CHD3, CHD4 and CHD5 define mutually exclusive NuRD complexes. Interacts with CDK2AP1. Interacts with DHX9. Interacts with DNMT1. Interacts with GATAD2A/p66-alpha. Interacts with GATAD2B/p66-beta. Interacts with GPN1. Interacts with MIZF. Interacts with PRMT5. Interacts with SIN3A. Interacts with SPHK2. Highly expressed in brain, heart, kidney, lung, skeletal muscle, spleen and testis. Detected at lower levels in embryonic stem cells.

The protein localises to the nucleus. It is found in the chromosome. Binds CpG islands in promoters where the DNA is methylated at position 5 of cytosine within CpG dinucleotides. Binds hemimethylated DNA as well. Recruits histone deacetylases and DNA methyltransferases to chromatin. Acts as a component of the histone deacetylase NuRD complex which participates in the remodeling of chromatin. Acts as transcriptional repressor and plays a role in gene silencing. Functions as a scaffold protein, targeting GATAD2A and GATAD2B to chromatin to promote repression. May enhance the activation of some unmethylated cAMP-responsive promoters. Selectively represses transcription activity of methylated rRNA promoters. This is Methyl-CpG-binding domain protein 2 from Mus musculus (Mouse).